Here is a 243-residue protein sequence, read N- to C-terminus: MAAAAAPRSSGKEALPAALGSASEPPRLFDGTTRLYICYFCPFAQRAWIIRNFKGLQDKIELVGIDLQDKPAWYKEKVYEQGTVPSLEHNGKIMGESLDLIKYIDSHFEGPALLPEDPEKRQFADELIAYANAFTKALYSPLISKADLSAETVAALDKIEAALSKFGDGPFFLGQFSLVDIAYVTIIERIQIYYSHIRKYEITNGRPNLEKFIEEINRIEAYTQTKNDPLYLLDLAKTHLKVA.

The 82-residue stretch at 31–112 (GTTRLYICYF…YIDSHFEGPA (82 aa)) folds into the GST N-terminal domain. Glutathione-binding positions include Lys70, Val84, and 96–97 (ES). The GST C-terminal domain maps to 117 to 240 (DPEKRQFADE…YLLDLAKTHL (124 aa)).

This sequence belongs to the GST superfamily. HSP26 family.

The sequence is that of Protein IN2-1 homolog A from Oryza sativa subsp. japonica (Rice).